We begin with the raw amino-acid sequence, 152 residues long: Small ribosomal subunit protein uS15 (152 aa).

It belongs to the universal ribosomal protein uS15 family. In terms of assembly, part of the 30S ribosomal subunit.

The sequence is that of Small ribosomal subunit protein uS15 from Saccharolobus solfataricus (strain ATCC 35092 / DSM 1617 / JCM 11322 / P2) (Sulfolobus solfataricus).